The sequence spans 360 residues: Casein kinase II subunit alpha (360 aa).

The Protein kinase domain occupies Y38–F323. ATP contacts are provided by residues L44–V52 and K67. The Proton acceptor role is filled by D155. A disordered region spans residues N334 to A360. A compositionally biased stretch (low complexity) spans Q338 to D354.

This sequence belongs to the protein kinase superfamily. Ser/Thr protein kinase family. CK2 subfamily. As to quaternary structure, tetramer of two alpha and two beta chains. In terms of tissue distribution, expressed in a subset of the adult male sensory neurons: CEM head neurons, ray RnB neurons, and hook HOB tail neurons.

It is found in the cell projection. It localises to the axon. The protein localises to the cilium. Its subcellular location is the dendrite. The protein resides in the perikaryon. It carries out the reaction L-seryl-[protein] + ATP = O-phospho-L-seryl-[protein] + ADP + H(+). The enzyme catalyses L-threonyl-[protein] + ATP = O-phospho-L-threonyl-[protein] + ADP + H(+). Casein kinases are operationally defined by their preferential utilization of acidic proteins such as caseins as substrates. The alpha chain contains the catalytic site. May participate in Wnt signaling. Modulates two aspects of male mating behavior; response to hermaphrodite contact and vulval location, acting in the same pathway as lov-1 and pkd-2. The chain is Casein kinase II subunit alpha (kin-3) from Caenorhabditis elegans.